The sequence spans 518 residues: GMP synthase [glutamine-hydrolyzing] (518 aa).

The 191-residue stretch at 13–203 (KIIVLDFGSQ…ALNVCGCKGD (191 aa)) folds into the Glutamine amidotransferase type-1 domain. The active-site Nucleophile is the cysteine 90. Catalysis depends on residues histidine 177 and glutamate 179. The GMPS ATP-PPase domain maps to 204–393 (WTMENFSEVE…LGMPDAIVWR (190 aa)). 231–237 (SGGVDSS) contacts ATP.

Homodimer.

The enzyme catalyses XMP + L-glutamine + ATP + H2O = GMP + L-glutamate + AMP + diphosphate + 2 H(+). The protein operates within purine metabolism; GMP biosynthesis; GMP from XMP (L-Gln route): step 1/1. Its function is as follows. Catalyzes the synthesis of GMP from XMP. The protein is GMP synthase [glutamine-hydrolyzing] of Listeria welshimeri serovar 6b (strain ATCC 35897 / DSM 20650 / CCUG 15529 / CIP 8149 / NCTC 11857 / SLCC 5334 / V8).